We begin with the raw amino-acid sequence, 244 residues long: MTSVPLLSMNLPRHVAIIMDGNGRWAQARDLPRIEGHRRGVTTVRTVTEMASELKLDALTLYCLSSENWKRPQAELDFLMHLLQQYLVEERRTIRDQNMRLRFIGRRDRLSDEVLKEIAKTQAVSENNTGTELVLAVDYGGRDELTRMTRQLAQQVRDGERSIDEITESLVDESLDTAGLPDVDLMIRTGGDIRISNYLLWQISYAELYFTPKCWPEFERDDFQAALDEFAGRQRRFGGLNVGA.

Residue Asp20 is part of the active site. Asp20 lines the Mg(2+) pocket. Residues 21 to 24, Trp25, Arg33, His37, and 65 to 67 contribute to the substrate site; these read GNGR and SSE. Asn68 functions as the Proton acceptor in the catalytic mechanism. Substrate contacts are provided by residues Trp69, Arg71, Arg188, and 194–196; that span reads RIS. Glu207 contributes to the Mg(2+) binding site.

The protein belongs to the UPP synthase family. Homodimer. The cofactor is Mg(2+).

Functionally, catalyzes the condensation of isopentenyl diphosphate (IPP) with allylic pyrophosphates generating different type of terpenoids. In Rhodopirellula baltica (strain DSM 10527 / NCIMB 13988 / SH1), this protein is Isoprenyl transferase.